The primary structure comprises 280 residues: Fructose-1,6-bisphosphatase class 1 (280 aa).

Residues Glu-64, Asp-83, Leu-85, and Asp-86 each contribute to the Mg(2+) site. Substrate is bound by residues 86–89, Tyr-189, and Lys-220; that span reads DGSS. Residue Glu-226 coordinates Mg(2+).

Belongs to the FBPase class 1 family. In terms of assembly, homotetramer. Requires Mg(2+) as cofactor.

It localises to the cytoplasm. It catalyses the reaction beta-D-fructose 1,6-bisphosphate + H2O = beta-D-fructose 6-phosphate + phosphate. The protein operates within carbohydrate biosynthesis; gluconeogenesis. The protein is Fructose-1,6-bisphosphatase class 1 of Campylobacter jejuni (strain RM1221).